We begin with the raw amino-acid sequence, 558 residues long: Dihydroxy-acid dehydratase (558 aa).

Aspartate 81 serves as a coordination point for Mg(2+). Residue cysteine 122 participates in [2Fe-2S] cluster binding. The Mg(2+) site is built by aspartate 123 and lysine 124. Position 124 is an N6-carboxylysine (lysine 124). Cysteine 195 provides a ligand contact to [2Fe-2S] cluster. Mg(2+) is bound at residue glutamate 447. The active-site Proton acceptor is the serine 473.

Belongs to the IlvD/Edd family. Homodimer. [2Fe-2S] cluster serves as cofactor. Requires Mg(2+) as cofactor.

The catalysed reaction is (2R)-2,3-dihydroxy-3-methylbutanoate = 3-methyl-2-oxobutanoate + H2O. It carries out the reaction (2R,3R)-2,3-dihydroxy-3-methylpentanoate = (S)-3-methyl-2-oxopentanoate + H2O. It functions in the pathway amino-acid biosynthesis; L-isoleucine biosynthesis; L-isoleucine from 2-oxobutanoate: step 3/4. Its pathway is amino-acid biosynthesis; L-valine biosynthesis; L-valine from pyruvate: step 3/4. Functionally, functions in the biosynthesis of branched-chain amino acids. Catalyzes the dehydration of (2R,3R)-2,3-dihydroxy-3-methylpentanoate (2,3-dihydroxy-3-methylvalerate) into 2-oxo-3-methylpentanoate (2-oxo-3-methylvalerate) and of (2R)-2,3-dihydroxy-3-methylbutanoate (2,3-dihydroxyisovalerate) into 2-oxo-3-methylbutanoate (2-oxoisovalerate), the penultimate precursor to L-isoleucine and L-valine, respectively. This chain is Dihydroxy-acid dehydratase, found in Bacillus subtilis (strain 168).